Consider the following 211-residue polypeptide: Small ribosomal subunit protein uS3 (211 aa).

The 70-residue stretch at 16–85 (IDEYFKTKLV…NPQIEVKQVE (70 aa)) folds into the KH type-2 domain.

Belongs to the universal ribosomal protein uS3 family. As to quaternary structure, part of the 30S ribosomal subunit.

In terms of biological role, binds the lower part of the 30S subunit head. The polypeptide is Small ribosomal subunit protein uS3 (Methanococcus maripaludis (strain C5 / ATCC BAA-1333)).